The chain runs to 949 residues: Insulin receptor substrate 1 (949 aa).

The region spanning 8 to 109 (GMALSGYLKK…WLDKLLVLQR (102 aa)) is the PH domain. Residues 122–236 (YDQVWQVVIQ…SAMSAKTESN (115 aa)) enclose the IRS-type PTB domain. The segment at 247–270 (PDLSHEPMRKRSSSANEASKPINV) is disordered. Phosphoserine is present on residues Ser-286, Ser-287, and Ser-342. Residues 304–345 (RNGTLSESSNQTYFGSNHGLRSNTISGNRPHSTNKHSNSPTF) show a composition bias toward polar residues. The tract at residues 304–373 (RNGTLSESSN…SDDNGSYSHY (70 aa)) is disordered. A Phosphotyrosine; by INSR modification is found at Tyr-410. A YXXM motif 1 motif is present at residues 410–413 (YIPM). The tract at residues 530–556 (RSQSSITKEGSGYGTSGNRQKKSTSAP) is disordered. Position 554 is a phosphoserine (Ser-554). The short motif at 640–643 (YLEM) is the YXXM motif 2 element. Residues 696–706 (REQTTSEEKKS) are compositionally biased toward basic and acidic residues. Positions 696 to 718 (REQTTSEEKKSNSPLNEKPFSLK) are disordered. Tyr-892 carries the phosphotyrosine; by INSR modification. The interval 906–949 (AKYLKRGSRESPPVSACPEDGNTYAKIDFDQSDSSSSSSNIFNT) is disordered. Phosphoserine is present on residues Ser-913 and Ser-916. Tyr-929 is modified (phosphotyrosine; by INSR). The segment covering 937–949 (SDSSSSSSNIFNT) has biased composition (low complexity).

Bindings to phosphatidylinositol 3-kinase and SHP2.

Activates phosphatidylinositol 3-kinase when bound to the regulatory p85 subunit. May mediate the control of various cellular processes by insulin-like peptides. When phosphorylated by the insulin receptor binds specifically to various cellular proteins containing SH2 domains. Involved in control of cell proliferation, cell size, and body and organ growth throughout development. Also has a role in a signaling pathway controlling the physiological response required to endure periods of low nutrient conditions. Insulin/insulin-like growth factor (IGF) signaling pathway has a role in regulating aging and is necessary in the ovary for vitellogenic maturation. The protein is Insulin receptor substrate 1 of Drosophila yakuba (Fruit fly).